A 180-amino-acid polypeptide reads, in one-letter code: O-acetyl-ADP-ribose deacetylase (180 aa).

The Macro domain maps to 1–175; the sequence is MKPQIEVVVG…LYQRLLIQRG (175 aa). Substrate contacts are provided by residues 11–12, Asn-25, 33–35, and 122–126; these read DI, GVD, and STGVY. The Proton acceptor role is filled by Asp-35.

This sequence belongs to the MacroD-type family. YmdB subfamily. As to quaternary structure, homodimer. Interacts with RNase III.

The enzyme catalyses 3''-O-acetyl-ADP-D-ribose + H2O = ADP-D-ribose + acetate + H(+). It catalyses the reaction 2''-O-acetyl-ADP-D-ribose + H2O = ADP-D-ribose + acetate + H(+). Functionally, deacetylates O-acetyl-ADP ribose to yield ADP-ribose and free acetate. Down-regulates ribonuclease 3 (RNase III) activity. Acts by interacting directly with the region of the ribonuclease that is required for dimerization/activation. The chain is O-acetyl-ADP-ribose deacetylase from Enterobacter sp. (strain 638).